We begin with the raw amino-acid sequence, 1151 residues long: Nardilysin (1151 aa).

The N-terminal stretch at 1 to 20 is a signal peptide; that stretch reads MLRRVTVAAVCATRRKLCEA. Disordered regions lie at residues 53 to 108 and 133 to 207; these read RNKA…KSPS and MEGK…KKTT. Phosphoserine is present on residues serine 86, serine 94, and serine 96. Over residues 141 to 198 the composition is skewed to acidic residues; the sequence is TDDEEEEEVEEEEEDDDEDSGAEIEDDDEEGFDDEDEFDDEHDDDLDTEDNELEELEE. Histidine 233 provides a ligand contact to Zn(2+). Glutamate 236 functions as the Proton acceptor in the catalytic mechanism. Residues histidine 237 and glutamate 314 each contribute to the Zn(2+) site.

This sequence belongs to the peptidase M16 family. As to quaternary structure, interacts with BACE1 and NRG1. The cofactor is Zn(2+). In terms of tissue distribution, primarily in adult heart, skeletal muscle, and testis and at much lower levels in other tissues.

The protein localises to the mitochondrion. The protein resides in the cell projection. It is found in the dendrite. It catalyses the reaction Hydrolysis of polypeptides, preferably at -Xaa-|-Arg-Lys-, and less commonly at -Arg-|-Arg-Xaa-, in which Xaa is not Arg or Lys.. Functionally, cleaves peptide substrates on the N-terminus of arginine residues in dibasic pairs. Is a critical activator of BACE1- and ADAM17-mediated pro-neuregulin ectodomain shedding, involved in the positive regulation of axonal maturation and myelination. Required for proper functioning of 2-oxoglutarate dehydrogenase (OGDH). This Homo sapiens (Human) protein is Nardilysin.